The primary structure comprises 728 residues: Elongation factor 2 (728 aa).

The region spanning 19–261 (EHIRNIAIAA…MVCEHFPNPV (243 aa)) is the tr-type G domain. Residues 28 to 35 (AHVDHGKT), 94 to 98 (DTPGH), and 148 to 151 (NKVD) contribute to the GTP site. At H596 the chain carries Diphthamide.

It belongs to the TRAFAC class translation factor GTPase superfamily. Classic translation factor GTPase family. EF-G/EF-2 subfamily.

It is found in the cytoplasm. Catalyzes the GTP-dependent ribosomal translocation step during translation elongation. During this step, the ribosome changes from the pre-translocational (PRE) to the post-translocational (POST) state as the newly formed A-site-bound peptidyl-tRNA and P-site-bound deacylated tRNA move to the P and E sites, respectively. Catalyzes the coordinated movement of the two tRNA molecules, the mRNA and conformational changes in the ribosome. The chain is Elongation factor 2 from Haloarcula marismortui (strain ATCC 43049 / DSM 3752 / JCM 8966 / VKM B-1809) (Halobacterium marismortui).